The primary structure comprises 453 residues: Allantoinase (453 aa).

Zn(2+)-binding residues include histidine 59, histidine 61, lysine 146, histidine 186, histidine 242, and aspartate 315. Position 146 is an N6-carboxylysine (lysine 146).

Belongs to the metallo-dependent hydrolases superfamily. Allantoinase family. In terms of assembly, homotetramer. Requires Zn(2+) as cofactor. Carboxylation allows a single lysine to coordinate two zinc ions.

The enzyme catalyses (S)-allantoin + H2O = allantoate + H(+). The protein operates within nitrogen metabolism; (S)-allantoin degradation; allantoate from (S)-allantoin: step 1/1. Functionally, catalyzes the conversion of allantoin (5-ureidohydantoin) to allantoic acid by hydrolytic cleavage of the five-member hydantoin ring. The polypeptide is Allantoinase (Salmonella gallinarum (strain 287/91 / NCTC 13346)).